Consider the following 187-residue polypeptide: Elongation factor P (187 aa).

It belongs to the elongation factor P family.

Its subcellular location is the cytoplasm. Its pathway is protein biosynthesis; polypeptide chain elongation. Involved in peptide bond synthesis. Stimulates efficient translation and peptide-bond synthesis on native or reconstituted 70S ribosomes in vitro. Probably functions indirectly by altering the affinity of the ribosome for aminoacyl-tRNA, thus increasing their reactivity as acceptors for peptidyl transferase. This Corynebacterium kroppenstedtii (strain DSM 44385 / JCM 11950 / CIP 105744 / CCUG 35717) protein is Elongation factor P.